The primary structure comprises 142 residues: Galectin-10 (142 aa).

Ser-2 carries the post-translational modification N-acetylserine. Positions 6–138 constitute a Galectin domain; that stretch reads VPYTEAASLS…DISLTKFNVS (133 aa).

Interacts with CEL. Expressed abundantly in the bone marrow. Expressed exclusively by eosinophils and basophils. Not detected in monocytes and neutrophils. Expressed in CD25-positive regulatory T-cells (Treg) (at protein level). Found in intestinal tissue from patients with Celiac disease, expression is directly related to the histological grade of mucosal damage and to the number of eosinophils found in the duodenal lesion (at protein level). Found in sputum of patients with eosinophilic inflammatory diseases such as asthma (at protein level).

Its subcellular location is the cytoplasm. The protein localises to the cytosol. The protein resides in the cytoplasmic granule. Its function is as follows. Regulates immune responses through the recognition of cell-surface glycans. Essential for the anergy and suppressive function of CD25-positive regulatory T-cells (Treg). The protein is Galectin-10 (CLC) of Homo sapiens (Human).